The sequence spans 308 residues: Carbonic anhydrase 6 (308 aa).

The first 17 residues, methionine 1–alanine 17, serve as a signal peptide directing secretion. Residues serine 21–phenylalanine 278 enclose the Alpha-carbonic anhydrase domain. The cysteines at positions 42 and 224 are disulfide-linked. A glycan (N-linked (GlcNAc...) asparagine) is linked at asparagine 67. Histidine 85 (proton donor/acceptor) is an active-site residue. Zn(2+) contacts are provided by histidine 111, histidine 113, and histidine 138. A substrate-binding site is contributed by threonine 220–threonine 221. Residue asparagine 256 is glycosylated (N-linked (GlcNAc...) asparagine).

It belongs to the alpha-carbonic anhydrase family. The cofactor is Zn(2+). In terms of tissue distribution, major constituent of saliva.

Its subcellular location is the secreted. The enzyme catalyses hydrogencarbonate + H(+) = CO2 + H2O. Its activity is regulated as follows. Inhibited by coumarins, sulfonamide derivatives such as acetazolamide (AZA), saccharin and Foscarnet (phosphonoformate trisodium salt). In terms of biological role, reversible hydration of carbon dioxide. Its role in saliva is unknown. The polypeptide is Carbonic anhydrase 6 (CA6) (Homo sapiens (Human)).